A 99-amino-acid polypeptide reads, in one-letter code: Aspartyl/glutamyl-tRNA(Asn/Gln) amidotransferase subunit C (99 aa).

It belongs to the GatC family. As to quaternary structure, heterotrimer of A, B and C subunits.

It carries out the reaction L-glutamyl-tRNA(Gln) + L-glutamine + ATP + H2O = L-glutaminyl-tRNA(Gln) + L-glutamate + ADP + phosphate + H(+). The enzyme catalyses L-aspartyl-tRNA(Asn) + L-glutamine + ATP + H2O = L-asparaginyl-tRNA(Asn) + L-glutamate + ADP + phosphate + 2 H(+). Functionally, allows the formation of correctly charged Asn-tRNA(Asn) or Gln-tRNA(Gln) through the transamidation of misacylated Asp-tRNA(Asn) or Glu-tRNA(Gln) in organisms which lack either or both of asparaginyl-tRNA or glutaminyl-tRNA synthetases. The reaction takes place in the presence of glutamine and ATP through an activated phospho-Asp-tRNA(Asn) or phospho-Glu-tRNA(Gln). This is Aspartyl/glutamyl-tRNA(Asn/Gln) amidotransferase subunit C from Corynebacterium diphtheriae (strain ATCC 700971 / NCTC 13129 / Biotype gravis).